The sequence spans 436 residues: Serine hydroxymethyltransferase (436 aa).

Residues leucine 120 and glycine 124–leucine 126 each bind (6S)-5,6,7,8-tetrahydrofolate. Lysine 229 is modified (N6-(pyridoxal phosphate)lysine).

This sequence belongs to the SHMT family. Homodimer. It depends on pyridoxal 5'-phosphate as a cofactor.

The protein localises to the cytoplasm. The catalysed reaction is (6R)-5,10-methylene-5,6,7,8-tetrahydrofolate + glycine + H2O = (6S)-5,6,7,8-tetrahydrofolate + L-serine. It participates in one-carbon metabolism; tetrahydrofolate interconversion. It functions in the pathway amino-acid biosynthesis; glycine biosynthesis; glycine from L-serine: step 1/1. Functionally, catalyzes the reversible interconversion of serine and glycine with tetrahydrofolate (THF) serving as the one-carbon carrier. This reaction serves as the major source of one-carbon groups required for the biosynthesis of purines, thymidylate, methionine, and other important biomolecules. Also exhibits THF-independent aldolase activity toward beta-hydroxyamino acids, producing glycine and aldehydes, via a retro-aldol mechanism. This Roseiflexus castenholzii (strain DSM 13941 / HLO8) protein is Serine hydroxymethyltransferase.